Consider the following 242-residue polypeptide: DNA repair protein RecO (242 aa).

This sequence belongs to the RecO family. As to quaternary structure, monomer.

In terms of biological role, involved in DNA repair and RecF pathway recombination. The protein is DNA repair protein RecO of Salmonella schwarzengrund (strain CVM19633).